A 279-amino-acid chain; its full sequence is Tryptophan synthase alpha chain (279 aa).

Residues E50 and D61 each act as proton acceptor in the active site.

Belongs to the TrpA family. Tetramer of two alpha and two beta chains.

It carries out the reaction (1S,2R)-1-C-(indol-3-yl)glycerol 3-phosphate + L-serine = D-glyceraldehyde 3-phosphate + L-tryptophan + H2O. It participates in amino-acid biosynthesis; L-tryptophan biosynthesis; L-tryptophan from chorismate: step 5/5. The alpha subunit is responsible for the aldol cleavage of indoleglycerol phosphate to indole and glyceraldehyde 3-phosphate. This chain is Tryptophan synthase alpha chain, found in Rhizobium johnstonii (strain DSM 114642 / LMG 32736 / 3841) (Rhizobium leguminosarum bv. viciae).